Consider the following 424-residue polypeptide: Glutamyl-tRNA reductase (424 aa).

Substrate is bound by residues 50-53 (TCNR), S98, 103-105 (EDQ), and Q109. The Nucleophile role is filled by C51. Residue 178–183 (GSGEMG) coordinates NADP(+).

Belongs to the glutamyl-tRNA reductase family. As to quaternary structure, homodimer.

It carries out the reaction (S)-4-amino-5-oxopentanoate + tRNA(Glu) + NADP(+) = L-glutamyl-tRNA(Glu) + NADPH + H(+). It participates in porphyrin-containing compound metabolism; protoporphyrin-IX biosynthesis; 5-aminolevulinate from L-glutamyl-tRNA(Glu): step 1/2. In terms of biological role, catalyzes the NADPH-dependent reduction of glutamyl-tRNA(Glu) to glutamate 1-semialdehyde (GSA). This chain is Glutamyl-tRNA reductase, found in Methanoregula boonei (strain DSM 21154 / JCM 14090 / 6A8).